The sequence spans 349 residues: Short-wave-sensitive opsin 1 (349 aa).

Residues 1 to 34 (MSKMSEEEEFLLFKNISLVGPWDGPQYHLAPVWA) are Extracellular-facing. Residue Asn-15 is glycosylated (N-linked (GlcNAc...) asparagine). A helical transmembrane segment spans residues 35–59 (FHLQAVFMGFVFFVGTPLNATVLVA). The Cytoplasmic segment spans residues 60–71 (TLRYRKLRQPLN). The helical transmembrane segment at 72 to 97 (YILVNVSLGGFIYCIFSVFIVFITSC) threads the bilayer. Residues 98-111 (YGYFVFGRHVCALE) lie on the Extracellular side of the membrane. A disulfide bridge connects residues Cys-108 and Cys-185. The chain crosses the membrane as a helical span at residues 112–131 (AFLGCTAGLVTGWSLAFLAF). The Cytoplasmic portion of the chain corresponds to 132 to 150 (ERYIIICKPFGNFRFSSKH). A helical transmembrane segment spans residues 151-174 (ALMVVVATWTIGIGVSIPPFFGWS). Topologically, residues 175–200 (RFVPEGLQCSCGPDWYTVGTKYYSEY) are extracellular. The helical transmembrane segment at 201–228 (YTWFLFIFCYIVPLSLICFSYSQLLGAL) threads the bilayer. The Cytoplasmic portion of the chain corresponds to 229–250 (RAVAAQQQESASTQKAEREVSH). The chain crosses the membrane as a helical span at residues 251–274 (MVVVMVGSFCLCYTPYAALAMYIV). The Extracellular portion of the chain corresponds to 275 to 282 (NNRNHGVD). The helical transmembrane segment at 283–307 (LRLVTIPAFFSKSACVYNPIIYCFM) threads the bilayer. Lys-294 bears the N6-(retinylidene)lysine mark. Residues 308–349 (NKQFRACIMEMVCGKPMTDESELSSSQKTEVSTVSSSQVGPN) are Cytoplasmic-facing. The tract at residues 327–349 (ESELSSSQKTEVSTVSSSQVGPN) is disordered. Positions 330–349 (LSSSQKTEVSTVSSSQVGPN) are enriched in polar residues.

It belongs to the G-protein coupled receptor 1 family. Opsin subfamily. In terms of processing, phosphorylated on some or all of the serine and threonine residues present in the C-terminal region.

Its subcellular location is the cell membrane. The protein resides in the photoreceptor inner segment. It localises to the cell projection. The protein localises to the cilium. It is found in the photoreceptor outer segment. Its subcellular location is the cytoplasm. The protein resides in the perinuclear region. In terms of biological role, visual pigments are the light-absorbing molecules that mediate vision. They consist of an apoprotein, opsin, covalently linked to cis-retinal. Required for the maintenance of cone outer segment organization in the ventral retina, but not essential for the maintenance of functioning cone photoreceptors. Involved in ensuring correct abundance and localization of retinal membrane proteins. May increase spectral sensitivity in dim light. This is Short-wave-sensitive opsin 1 (OPN1SW) from Bos taurus (Bovine).